The sequence spans 277 residues: Diaminopimelate epimerase (277 aa).

The substrate site is built by asparagine 15 and asparagine 74. Cysteine 83 (proton donor) is an active-site residue. Residues 84 to 85 (GN), asparagine 159, asparagine 194, and 212 to 213 (ER) contribute to the substrate site. Cysteine 221 serves as the catalytic Proton acceptor. 222–223 (GT) lines the substrate pocket.

It belongs to the diaminopimelate epimerase family. In terms of assembly, homodimer.

Its subcellular location is the cytoplasm. It carries out the reaction (2S,6S)-2,6-diaminopimelate = meso-2,6-diaminopimelate. It participates in amino-acid biosynthesis; L-lysine biosynthesis via DAP pathway; DL-2,6-diaminopimelate from LL-2,6-diaminopimelate: step 1/1. Catalyzes the stereoinversion of LL-2,6-diaminopimelate (L,L-DAP) to meso-diaminopimelate (meso-DAP), a precursor of L-lysine and an essential component of the bacterial peptidoglycan. The chain is Diaminopimelate epimerase from Corynebacterium glutamicum (strain R).